The chain runs to 486 residues: PTS system N-acetylmuramic acid-specific EIIBC component (486 aa).

The PTS EIIB type-1 domain occupies 1 to 89 (MAKITQTMIS…NKLIESVING (89 aa)). The Phosphocysteine intermediate; for EIIB activity role is filled by C28. The region spanning 127–486 (SKFATIFTPL…FFGSKDVDLS (360 aa)) is the PTS EIIC type-1 domain. Transmembrane regions (helical) follow at residues 129–149 (FATI…LLGF), 170–190 (LIAY…ILIG), 196–216 (AFGG…LGYN), 230–250 (FFGY…AAII), 268–288 (MILT…VVIM), 312–332 (AAIL…QGFV), 347–367 (LFPI…ALYF), 381–401 (GAII…VTLP), 411–431 (IGGA…LPVG), and 453–473 (IFAG…VGFL).

It is found in the cell inner membrane. It catalyses the reaction N-acetyl-beta-D-muramate(out) + N(pros)-phospho-L-histidyl-[protein] = N-acetyl-beta-D-muramate 6-phosphate(in) + L-histidyl-[protein]. Its function is as follows. The phosphoenolpyruvate-dependent sugar phosphotransferase system (sugar PTS), a major carbohydrate active transport system, catalyzes the phosphorylation of incoming sugar substrates concomitantly with their translocation across the cell membrane. This system is involved in N-acetylmuramic acid (MurNAc) transport, yielding cytoplasmic MurNAc-6-P. Is also able to take up anhydro-N-acetylmuramic acid (anhMurNAc), but cannot phosphorylate the carbon 6, probably because of the 1,6-anhydro ring. This Vibrio vulnificus (strain YJ016) protein is PTS system N-acetylmuramic acid-specific EIIBC component (murP).